A 534-amino-acid polypeptide reads, in one-letter code: Tyrosine-protein kinase Fyn (534 aa).

Residue G2 is the site of N-myristoyl glycine attachment. S-palmitoyl cysteine attachment occurs at residues C3 and C6. Residue T12 is modified to Phosphothreonine; by PKC. Residues 15–39 (TDERDGSLTQSSGYRYGTDPTPQHY) are disordered. The 62-residue stretch at 82-143 (TGVTLFEALY…PSNYVAPVDS (62 aa)) folds into the SH3 domain. The SH2 domain occupies 149–246 (WYFGKLGRKD…GLCFNLTVIA (98 aa)). The Protein kinase domain maps to 268–521 (LFLEQKLGQG…YLQGFLEDYF (254 aa)). ATP contacts are provided by residues 274-282 (LGQGCFAEV) and K296. D387 (proton acceptor) is an active-site residue. Y417 carries the phosphotyrosine; by autocatalysis modification. Residue Y528 is modified to Phosphotyrosine.

This sequence belongs to the protein kinase superfamily. Tyr protein kinase family. SRC subfamily. In terms of assembly, associates through its SH3 domain, to the p85 subunit of phosphatidylinositol 3-kinase. Mn(2+) serves as cofactor. As to expression, thymus and spleen.

The protein localises to the cytoplasm. It is found in the nucleus. The protein resides in the cell membrane. It localises to the perikaryon. It carries out the reaction L-tyrosyl-[protein] + ATP = O-phospho-L-tyrosyl-[protein] + ADP + H(+). Its activity is regulated as follows. Inhibited by phosphorylation of Tyr-528 by leukocyte common antigen and activated by dephosphorylation of this site. In terms of biological role, tyrosine-protein kinase implicated in the control of cell growth. Plays a role in the regulation of intracellular calcium levels. Required in brain development and mature brain function with important roles in the regulation of axon growth, axon guidance, and neurite extension. Role in CNTN1-mediated signaling. This is Tyrosine-protein kinase Fyn (FYN) from Gallus gallus (Chicken).